Consider the following 67-residue polypeptide: Large ribosomal subunit protein uL30 (67 aa).

The protein belongs to the universal ribosomal protein uL30 family. As to quaternary structure, part of the 50S ribosomal subunit.

The protein is Large ribosomal subunit protein uL30 of Thermotoga maritima (strain ATCC 43589 / DSM 3109 / JCM 10099 / NBRC 100826 / MSB8).